The primary structure comprises 342 residues: Oxygen-dependent coproporphyrinogen-III oxidase (342 aa).

Serine 98 is a binding site for substrate. Residues histidine 102 and histidine 112 each coordinate a divalent metal cation. The Proton donor role is filled by histidine 112. 114–116 is a binding site for substrate; that stretch reads NYR. A divalent metal cation is bound by residues histidine 146 and histidine 176. Residues 266-301 are important for dimerization; that stretch reads YVEFNLVWDRGTIFGLQTNGRTESILMSLPPLARWE.

The protein belongs to the aerobic coproporphyrinogen-III oxidase family. Homodimer. A divalent metal cation serves as cofactor.

It is found in the cytoplasm. It carries out the reaction coproporphyrinogen III + O2 + 2 H(+) = protoporphyrinogen IX + 2 CO2 + 2 H2O. It functions in the pathway porphyrin-containing compound metabolism; protoporphyrin-IX biosynthesis; protoporphyrinogen-IX from coproporphyrinogen-III (O2 route): step 1/1. In terms of biological role, involved in the heme and chlorophyll biosynthesis. Catalyzes the aerobic oxidative decarboxylation of propionate groups of rings A and B of coproporphyrinogen-III to yield the vinyl groups in protoporphyrinogen-IX. In Prochlorococcus marinus (strain MIT 9301), this protein is Oxygen-dependent coproporphyrinogen-III oxidase.